A 191-amino-acid polypeptide reads, in one-letter code: Ribosomal RNA small subunit methyltransferase G (191 aa).

S-adenosyl-L-methionine is bound by residues Gly59, 111-112, and Arg124; that span reads IE.

This sequence belongs to the methyltransferase superfamily. RNA methyltransferase RsmG family.

The protein resides in the cytoplasm. Its function is as follows. Specifically methylates the N7 position of a guanine in 16S rRNA. The protein is Ribosomal RNA small subunit methyltransferase G of Mycoplasma pneumoniae (strain ATCC 29342 / M129 / Subtype 1) (Mycoplasmoides pneumoniae).